Consider the following 145-residue polypeptide: 3-dehydroquinate dehydratase (145 aa).

The Proton acceptor role is filled by tyrosine 24. 3 residues coordinate substrate: asparagine 75, histidine 81, and aspartate 88. Histidine 101 functions as the Proton donor in the catalytic mechanism. Residues 102 to 103 (IS) and arginine 112 each bind substrate.

This sequence belongs to the type-II 3-dehydroquinase family. As to quaternary structure, homododecamer.

It catalyses the reaction 3-dehydroquinate = 3-dehydroshikimate + H2O. It participates in metabolic intermediate biosynthesis; chorismate biosynthesis; chorismate from D-erythrose 4-phosphate and phosphoenolpyruvate: step 3/7. Catalyzes a trans-dehydration via an enolate intermediate. This chain is 3-dehydroquinate dehydratase, found in Rhizobium etli (strain CIAT 652).